The sequence spans 170 residues: UPF0316 protein CLK_3798 (170 aa).

The next 2 helical transmembrane spans lie at 1–21 (MLSYYAFIFFAKIMEVALMTI) and 36–56 (IIGFIEVTIWLYVTSSVLSGI).

This sequence belongs to the UPF0316 family.

It localises to the cell membrane. The sequence is that of UPF0316 protein CLK_3798 from Clostridium botulinum (strain Loch Maree / Type A3).